A 139-amino-acid polypeptide reads, in one-letter code: Small ribosomal subunit protein bS6 (139 aa).

This sequence belongs to the bacterial ribosomal protein bS6 family.

Its function is as follows. Binds together with bS18 to 16S ribosomal RNA. This is Small ribosomal subunit protein bS6 from Borreliella afzelii (strain PKo) (Borrelia afzelii).